Reading from the N-terminus, the 525-residue chain is Endoglucanase 10 (525 aa).

The first 26 residues, 1–26, serve as a signal peptide directing secretion; the sequence is MEEKSKSRGWCGWFIAIIVLASVILA. Catalysis depends on aspartate 109, which acts as the Nucleophile. A glycan (N-linked (GlcNAc...) asparagine) is linked at asparagine 259. Residue histidine 442 is part of the active site. N-linked (GlcNAc...) asparagine glycosylation is found at asparagine 464 and asparagine 484. Catalysis depends on residues aspartate 489 and glutamate 498.

The protein belongs to the glycosyl hydrolase 9 (cellulase E) family.

The protein localises to the secreted. The enzyme catalyses Endohydrolysis of (1-&gt;4)-beta-D-glucosidic linkages in cellulose, lichenin and cereal beta-D-glucans.. In Arabidopsis thaliana (Mouse-ear cress), this protein is Endoglucanase 10.